Reading from the N-terminus, the 92-residue chain is Small ribosomal subunit protein uS19 (92 aa).

It belongs to the universal ribosomal protein uS19 family.

Its function is as follows. Protein S19 forms a complex with S13 that binds strongly to the 16S ribosomal RNA. This is Small ribosomal subunit protein uS19 from Methylobacterium radiotolerans (strain ATCC 27329 / DSM 1819 / JCM 2831 / NBRC 15690 / NCIMB 10815 / 0-1).